Reading from the N-terminus, the 212-residue chain is Probable chemoreceptor glutamine deamidase CheD (212 aa).

It belongs to the CheD family.

It catalyses the reaction L-glutaminyl-[protein] + H2O = L-glutamyl-[protein] + NH4(+). Functionally, probably deamidates glutamine residues to glutamate on methyl-accepting chemotaxis receptors (MCPs), playing an important role in chemotaxis. This chain is Probable chemoreceptor glutamine deamidase CheD, found in Bordetella parapertussis (strain 12822 / ATCC BAA-587 / NCTC 13253).